The following is a 649-amino-acid chain: UvrABC system protein C (649 aa).

The GIY-YIG domain maps to 12–91 (SSPGVYLMKS…IKQHRPKYNI (80 aa)). Positions 201-236 (NEVARLYRSKMNLASEQMRYEDAARYRDLLRAIEVT) constitute a UVR domain. Positions 603-649 (RLHGGPLPNPPPPGEGAMGDGSIPSPRNGVMDDSIPSPSGRGWPKAG) are disordered.

This sequence belongs to the UvrC family. Interacts with UvrB in an incision complex.

Its subcellular location is the cytoplasm. Functionally, the UvrABC repair system catalyzes the recognition and processing of DNA lesions. UvrC both incises the 5' and 3' sides of the lesion. The N-terminal half is responsible for the 3' incision and the C-terminal half is responsible for the 5' incision. This is UvrABC system protein C from Geobacter sp. (strain M21).